A 148-amino-acid chain; its full sequence is Nucleoside diphosphate kinase A (148 aa).

Lys9, Phe57, Arg85, Thr91, Arg102, and Asn112 together coordinate ATP. The Pros-phosphohistidine intermediate role is filled by His115.

The protein belongs to the NDK family. It depends on Mg(2+) as a cofactor.

It carries out the reaction a 2'-deoxyribonucleoside 5'-diphosphate + ATP = a 2'-deoxyribonucleoside 5'-triphosphate + ADP. The enzyme catalyses a ribonucleoside 5'-diphosphate + ATP = a ribonucleoside 5'-triphosphate + ADP. Its function is as follows. Major role in the synthesis of nucleoside triphosphates other than ATP. The ATP gamma phosphate is transferred to the NDP beta phosphate via a ping-pong mechanism, using a phosphorylated active-site intermediate. This is Nucleoside diphosphate kinase A from Flaveria bidentis (Coastal plain yellowtops).